A 171-amino-acid polypeptide reads, in one-letter code: Probable DNA-directed RNA polymerase subunit delta (171 aa).

Positions 14-81 constitute an HTH HARE-type domain; sequence MALVEIAYEI…SDQTWGLRSW (68 aa). Residues 138-171 are disordered; it reads EFDEIDEADDDELDDLEDEILDDDEDFDEEEDEE.

Belongs to the RpoE family. In terms of assembly, RNAP is composed of a core of 2 alpha, a beta and a beta' subunits. The core is associated with a delta subunit and one of several sigma factors.

Functionally, participates in both the initiation and recycling phases of transcription. In the presence of the delta subunit, RNAP displays an increased specificity of transcription, a decreased affinity for nucleic acids, and an increased efficiency of RNA synthesis because of enhanced recycling. In Bacillus licheniformis (strain ATCC 14580 / DSM 13 / JCM 2505 / CCUG 7422 / NBRC 12200 / NCIMB 9375 / NCTC 10341 / NRRL NRS-1264 / Gibson 46), this protein is Probable DNA-directed RNA polymerase subunit delta.